We begin with the raw amino-acid sequence, 364 residues long: Cobalt-precorrin-5B C(1)-methyltransferase (364 aa).

Belongs to the CbiD family.

The catalysed reaction is Co-precorrin-5B + S-adenosyl-L-methionine = Co-precorrin-6A + S-adenosyl-L-homocysteine. It functions in the pathway cofactor biosynthesis; adenosylcobalamin biosynthesis; cob(II)yrinate a,c-diamide from sirohydrochlorin (anaerobic route): step 6/10. Functionally, catalyzes the methylation of C-1 in cobalt-precorrin-5B to form cobalt-precorrin-6A. This is Cobalt-precorrin-5B C(1)-methyltransferase from Thermoplasma acidophilum (strain ATCC 25905 / DSM 1728 / JCM 9062 / NBRC 15155 / AMRC-C165).